Reading from the N-terminus, the 538-residue chain is (R)-citramalate synthase (538 aa).

A Pyruvate carboxyltransferase domain is found at 3-268; it reads IKVYDTTLRD…IPKENLKKLF (266 aa).

It belongs to the alpha-IPM synthase/homocitrate synthase family.

The enzyme catalyses pyruvate + acetyl-CoA + H2O = (3R)-citramalate + CoA + H(+). It participates in amino-acid biosynthesis; L-isoleucine biosynthesis; 2-oxobutanoate from pyruvate: step 1/3. In terms of biological role, catalyzes the condensation of pyruvate and acetyl-coenzyme A to form (R)-citramalate. This is (R)-citramalate synthase from Thermotoga maritima (strain ATCC 43589 / DSM 3109 / JCM 10099 / NBRC 100826 / MSB8).